The chain runs to 337 residues: Glyceraldehyde-3-phosphate dehydrogenase 1, cytosolic (337 aa).

The interval 1 to 151 (MGKIKIGING…YTSDVNIVSN (151 aa)) is binding to NAD. NAD(+) is bound by residues 13–14 (RI), aspartate 35, and arginine 82. The interval 152–337 (ASCTTNCLAP…DLIRHMFKTQ (186 aa)) is catalytic. D-glyceraldehyde 3-phosphate-binding positions include 153–155 (SCT), threonine 184, 213–214 (TG), and arginine 236. Residue cysteine 154 is the Nucleophile of the active site. Position 318 (asparagine 318) interacts with NAD(+).

The protein belongs to the glyceraldehyde-3-phosphate dehydrogenase family. In terms of assembly, homotetramer.

It localises to the cytoplasm. The catalysed reaction is D-glyceraldehyde 3-phosphate + phosphate + NAD(+) = (2R)-3-phospho-glyceroyl phosphate + NADH + H(+). Its pathway is carbohydrate degradation; glycolysis; pyruvate from D-glyceraldehyde 3-phosphate: step 1/5. Key enzyme in glycolysis that catalyzes the first step of the pathway by converting D-glyceraldehyde 3-phosphate (G3P) into 3-phospho-D-glyceroyl phosphate. Essential for the maintenance of cellular ATP levels and carbohydrate metabolism. This is Glyceraldehyde-3-phosphate dehydrogenase 1, cytosolic (GAPC1) from Zea mays (Maize).